Here is a 303-residue protein sequence, read N- to C-terminus: Glycine--tRNA ligase alpha subunit (303 aa).

Belongs to the class-II aminoacyl-tRNA synthetase family. Tetramer of two alpha and two beta subunits.

The protein localises to the cytoplasm. The catalysed reaction is tRNA(Gly) + glycine + ATP = glycyl-tRNA(Gly) + AMP + diphosphate. The polypeptide is Glycine--tRNA ligase alpha subunit (Bordetella pertussis (strain Tohama I / ATCC BAA-589 / NCTC 13251)).